We begin with the raw amino-acid sequence, 130 residues long: Ribonuclease P protein component (130 aa).

This sequence belongs to the RnpA family. In terms of assembly, consists of a catalytic RNA component (M1 or rnpB) and a protein subunit.

The enzyme catalyses Endonucleolytic cleavage of RNA, removing 5'-extranucleotides from tRNA precursor.. Functionally, RNaseP catalyzes the removal of the 5'-leader sequence from pre-tRNA to produce the mature 5'-terminus. It can also cleave other RNA substrates such as 4.5S RNA. The protein component plays an auxiliary but essential role in vivo by binding to the 5'-leader sequence and broadening the substrate specificity of the ribozyme. This is Ribonuclease P protein component from Psychrobacter sp. (strain PRwf-1).